We begin with the raw amino-acid sequence, 66 residues long: UPF0457 protein BA_2525/GBAA_2525/BAS2348 (66 aa).

The protein belongs to the UPF0457 family.

The sequence is that of UPF0457 protein BA_2525/GBAA_2525/BAS2348 from Bacillus anthracis.